Reading from the N-terminus, the 357-residue chain is Putative electron transport protein YccM (357 aa).

Residues 1–36 (MAENKRTRWQRRPGTTGGKLPWNDWRNATTWRKATQ) lie on the Cytoplasmic side of the membrane. The chain crosses the membrane as a helical span at residues 37–54 (LLLLAMNIYIAITFWYWV). Residues 55-91 (RYYETASSTTFVARPGGIEGWLPIAGLMNLKYSLVTG) are Periplasmic-facing. Residues 92–114 (QLPSVHAAAMLLLVAFIVISLLL) traverse the membrane as a helical segment. The Cytoplasmic portion of the chain corresponds to 115–158 (KKAFCSWLCPVGTLSELIGDLGNKLFGRQCVLPRWLDIPLRGVK). A helical membrane pass occupies residues 159–181 (YLLLSFFIYIALLMPAQAIHYFM). The Periplasmic portion of the chain corresponds to 182-195 (LSPYSVVMDVKMLD). A helical membrane pass occupies residues 196-218 (FFRHMGTATLISVTVLLIASLFI). Topologically, residues 219 to 309 (RHAWCRYLCP…KPAANKKAFA (91 aa)) are cytoplasmic. 2 consecutive 4Fe-4S ferredoxin-type domains span residues 242-270 (FKIR…VDKL) and 269-299 (KLIQ…FSLQ). [4Fe-4S] cluster is bound by residues cysteine 251, cysteine 254, cysteine 257, cysteine 261, cysteine 278, cysteine 281, cysteine 284, and cysteine 288. A helical membrane pass occupies residues 310 to 332 (LSGWLMTLLVLGIMFAVIGYAMY). Over 333 to 357 (AGVWQSPVPEELYRRLIPQAPMIGH) the chain is Periplasmic.

The protein localises to the cell inner membrane. This Escherichia coli (strain K12) protein is Putative electron transport protein YccM (yccM).